The sequence spans 902 residues: 26S proteasome regulatory subunit rpn-1 (902 aa).

Basic and acidic residues predominate over residues 1–41; the sequence is MAQESDLSKTADKGKGKAVDDEKKHQDVDGKTPANGKKEEE. The segment at 1-54 is disordered; sequence MAQESDLSKTADKGKGKAVDDEKKHQDVDGKTPANGKKEEEQNASEELSEEDQQ. The segment covering 42–52 has biased composition (acidic residues); it reads QNASEELSEED. PC repeat units follow at residues 415 to 448, 449 to 487, 488 to 522, 525 to 559, 568 to 601, 645 to 680, 681 to 715, and 716 to 750; these read STVA…QIQA, GAYL…LIRV, ATIM…SMQV, MAAL…GSRL, ALGL…KPTA, AVLG…NIRR, AVPL…EVAI, and NAIF…DQES.

Belongs to the proteasome subunit S2 family.

Its function is as follows. Acts as a regulatory subunit of the 26 proteasome which is involved in the ATP-dependent degradation of ubiquitinated proteins. This is 26S proteasome regulatory subunit rpn-1 (rpn-1) from Neurospora crassa (strain ATCC 24698 / 74-OR23-1A / CBS 708.71 / DSM 1257 / FGSC 987).